Reading from the N-terminus, the 1218-residue chain is Coatomer subunit alpha-2 (1218 aa).

WD repeat units follow at residues 7–48 (TKSN…DRFD), 49–88 (EHEG…CLFT), 91–132 (GHLD…SVLT), 133–172 (GHNH…KKSA), 202–241 (GHDR…AWEV), 246–285 (GHMN…GIQT), 288–326 (REHD…PAFA), and 363–404 (SLNQ…VGRS). A disordered region spans residues 826-849 (NRGAVDEEEEDVEGDWGEGLDKFD). Acidic residues predominate over residues 831-843 (DEEEEDVEGDWGE).

Oligomeric complex that consists of at least the alpha, beta, beta', gamma, delta, epsilon and zeta subunits.

It localises to the cytoplasm. The protein localises to the golgi apparatus membrane. Its subcellular location is the cytoplasmic vesicle. The protein resides in the COPI-coated vesicle membrane. The coatomer is a cytosolic protein complex that binds to dilysine motifs and reversibly associates with Golgi non-clathrin-coated vesicles, which further mediate biosynthetic protein transport from the ER, via the Golgi up to the trans Golgi network. Coatomer complex is required for budding from Golgi membranes, and is essential for the retrograde Golgi-to-ER transport of dilysine-tagged proteins. This Arabidopsis thaliana (Mouse-ear cress) protein is Coatomer subunit alpha-2.